A 276-amino-acid chain; its full sequence is Pantothenate synthetase (276 aa).

Residue 27–34 participates in ATP binding; sequence MGALHRGH. Histidine 34 acts as the Proton donor in catalysis. Glutamine 58 contacts (R)-pantoate. Position 58 (glutamine 58) interacts with beta-alanine. 147–150 provides a ligand contact to ATP; it reads GKKD. Residue glutamine 153 participates in (R)-pantoate binding. ATP is bound by residues valine 176 and 184–187; that span reads LSSR.

It belongs to the pantothenate synthetase family. As to quaternary structure, homodimer.

The protein localises to the cytoplasm. It carries out the reaction (R)-pantoate + beta-alanine + ATP = (R)-pantothenate + AMP + diphosphate + H(+). The protein operates within cofactor biosynthesis; (R)-pantothenate biosynthesis; (R)-pantothenate from (R)-pantoate and beta-alanine: step 1/1. In terms of biological role, catalyzes the condensation of pantoate with beta-alanine in an ATP-dependent reaction via a pantoyl-adenylate intermediate. This chain is Pantothenate synthetase, found in Helicobacter pylori (strain G27).